The following is a 164-amino-acid chain: Small ribosomal subunit protein uS5 (164 aa).

An S5 DRBM domain is found at 9–72 (YQEKLLKISR…AAAKKNIVKI (64 aa)).

This sequence belongs to the universal ribosomal protein uS5 family. Part of the 30S ribosomal subunit. Contacts proteins S4 and S8.

Its function is as follows. With S4 and S12 plays an important role in translational accuracy. Located at the back of the 30S subunit body where it stabilizes the conformation of the head with respect to the body. This chain is Small ribosomal subunit protein uS5, found in Fusobacterium nucleatum subsp. nucleatum (strain ATCC 25586 / DSM 15643 / BCRC 10681 / CIP 101130 / JCM 8532 / KCTC 2640 / LMG 13131 / VPI 4355).